The sequence spans 166 residues: Small ribosomal subunit protein cS23z (166 aa).

This sequence belongs to the chloroplast-specific ribosomal protein cS23 family. In terms of assembly, part of the 30S ribosomal subunit.

The protein resides in the plastid. Its subcellular location is the chloroplast. Its function is as follows. Component of the chloroplast ribosome (chloro-ribosome), a dedicated translation machinery responsible for the synthesis of chloroplast genome-encoded proteins, including proteins of the transcription and translation machinery and components of the photosynthetic apparatus. The chain is Small ribosomal subunit protein cS23z from Arabidopsis thaliana (Mouse-ear cress).